The sequence spans 432 residues: CLOCK-interacting pacemaker (432 aa).

2 disordered regions span residues 71 to 98 (ADSD…SEDM) and 194 to 315 (SYTK…SSPL). At Ser246 the chain carries Phosphoserine. Residues 272–283 (SPQTLQPVSSSH) show a composition bias toward polar residues. Positions 364-395 (EITLKTKELIRQNQATQAELDQLKEQTQMFIE) form a coiled coil. A disordered region spans residues 408–432 (LQASLTSGSSHSGSDLDTLSDHPDV). The span at 411–424 (SLTSGSSHSGSDLD) shows a compositional bias: low complexity.

As to quaternary structure, interacts with CLOCK. Forms a ternary complex with the CLOCK-BMAL1 heterodimer. Interacts with CAD and HSPA5. Expressed in the heart, kidney and liver and shows a circadian oscillation in these tissues with a peak at circadian time 14 hours (at protein level). Expressed in the brain, including the suprachiasmatic nucleus (SCN) of the brain, and in multiple peripheral tissues such as heart, liver and kidney. Exhibits a circadian oscillation in the peripheral tissues with a peak at circadian time 14 hours.

It is found in the nucleus. The protein resides in the cytoplasm. It localises to the cytosol. Its function is as follows. Transcriptional repressor which may act as a negative-feedback regulator of CLOCK-BMAL1 transcriptional activity in the circadian-clock mechanism. May stimulate BMAL1-dependent phosphorylation of CLOCK. However, the physiological relevance of these observations is unsure, since experiments in knockout mice showed that CIPC is not critially required for basic circadian clock. The polypeptide is CLOCK-interacting pacemaker (Cipc) (Mus musculus (Mouse)).